A 173-amino-acid polypeptide reads, in one-letter code: 3-hydroxydecanoyl-[acyl-carrier-protein] dehydratase (173 aa).

The active site involves histidine 71.

The protein belongs to the thioester dehydratase family. FabA subfamily. As to quaternary structure, homodimer.

It localises to the cytoplasm. It carries out the reaction a (3R)-hydroxyacyl-[ACP] = a (2E)-enoyl-[ACP] + H2O. The enzyme catalyses (3R)-hydroxydecanoyl-[ACP] = (2E)-decenoyl-[ACP] + H2O. It catalyses the reaction (2E)-decenoyl-[ACP] = (3Z)-decenoyl-[ACP]. It participates in lipid metabolism; fatty acid biosynthesis. Its function is as follows. Necessary for the introduction of cis unsaturation into fatty acids. Catalyzes the dehydration of (3R)-3-hydroxydecanoyl-ACP to E-(2)-decenoyl-ACP and then its isomerization to Z-(3)-decenoyl-ACP. Can catalyze the dehydratase reaction for beta-hydroxyacyl-ACPs with saturated chain lengths up to 16:0, being most active on intermediate chain length. This is 3-hydroxydecanoyl-[acyl-carrier-protein] dehydratase from Bradyrhizobium diazoefficiens (strain JCM 10833 / BCRC 13528 / IAM 13628 / NBRC 14792 / USDA 110).